The chain runs to 203 residues: Probable nicotinate-nucleotide adenylyltransferase (203 aa).

The protein belongs to the NadD family.

It catalyses the reaction nicotinate beta-D-ribonucleotide + ATP + H(+) = deamido-NAD(+) + diphosphate. Its pathway is cofactor biosynthesis; NAD(+) biosynthesis; deamido-NAD(+) from nicotinate D-ribonucleotide: step 1/1. Catalyzes the reversible adenylation of nicotinate mononucleotide (NaMN) to nicotinic acid adenine dinucleotide (NaAD). The chain is Probable nicotinate-nucleotide adenylyltransferase from Dictyoglomus turgidum (strain DSM 6724 / Z-1310).